Consider the following 58-residue polypeptide: ADVPGNYPLDKDGNTYKCFLLGENEECLNVCKLHGVQYGYCYASKCWCEYLEDDKDSV.

Residues 3-58 (VPGNYPLDKDGNTYKCFLLGENEECLNVCKLHGVQYGYCYASKCWCEYLEDDKDSV) enclose the LCN-type CS-alpha/beta domain. Cystine bridges form between C18/C41, C27/C46, and C31/C48.

As to expression, expressed by the venom gland.

Its subcellular location is the secreted. Beta toxins bind voltage-independently at site-4 of sodium channels (Nav) and shift the voltage of activation toward more negative potentials thereby affecting sodium channel activation and promoting spontaneous and repetitive firing. Does not produce effect when administered to blowfly and cabbage looper larvae. In mice, does not produce convulsions, tremors, increased ventilation nor death. This is Ikitoxin from Parabuthus transvaalicus (Transvaal thick-tailed scorpion).